The primary structure comprises 126 residues: Large ribosomal subunit protein eL18 (126 aa).

The protein belongs to the eukaryotic ribosomal protein eL18 family.

This Methanosarcina acetivorans (strain ATCC 35395 / DSM 2834 / JCM 12185 / C2A) protein is Large ribosomal subunit protein eL18.